Consider the following 297-residue polypeptide: Cyclin-dependent kinase 1 (297 aa).

Position 1 is an N-acetylmethionine (Met1). Phosphotyrosine; by PKR is present on Tyr4. The 284-residue stretch at 4–287 folds into the Protein kinase domain; sequence YTKIEKIGEG…GKMALNHPYF (284 aa). N6-acetyllysine; alternate occurs at positions 6 and 9. Residues Lys6 and Lys9 each participate in a glycyl lysine isopeptide (Lys-Gly) (interchain with G-Cter in SUMO2); alternate cross-link. ATP is bound at residue 10–18; the sequence is IGEGTYGVV. Thr14 bears the Phosphothreonine; by PKMYT1 mark. The residue at position 15 (Tyr15) is a Phosphotyrosine; by PKMYT1, WEE1, WEE2 and PKC/PRKCD. Tyr19 bears the Phosphotyrosine mark. Lys20 participates in a covalent cross-link: Glycyl lysine isopeptide (Lys-Gly) (interchain with G-Cter in SUMO2). Residue Lys33 participates in ATP binding. Phosphoserine is present on Ser39. Phosphotyrosine is present on Tyr77. Asp128 functions as the Proton acceptor in the catalytic mechanism. A Glycyl lysine isopeptide (Lys-Gly) (interchain with G-Cter in SUMO2) cross-link involves residue Lys139. A Phosphothreonine modification is found at Thr141. Thr161 is modified (phosphothreonine; by CAK). A Phosphoserine modification is found at Ser178. At Thr222 the chain carries Phosphothreonine. An N6-succinyllysine modification is found at Lys245. Ser248 is modified (phosphoserine).

The protein belongs to the protein kinase superfamily. CMGC Ser/Thr protein kinase family. CDC2/CDKX subfamily. In terms of assembly, forms a stable but non-covalent complex with a regulatory subunit and with a cyclin. The cyclin subunit imparts substrate specificity to the complex. Interacts with cyclins-B (CCNB1, CCNB2 and CCNB3) to form a serine/threonine kinase holoenzyme complex also known as maturation promoting factor (MPF). Promotes G2-M transition when in complex with a cyclin-B. Can also form CDK1-cylin-D and CDK1-cyclin-E complexes that phosphorylate RB1 in vitro. Associates with cyclins-A and B1 during S-phase in regenerating hepatocytes. Interacts with DLGAP5. Binds to the CDK inhibitors CDKN1A/p21 and CDKN1B/p27. Interacts with catalytically active CCNB1 and RALBP1 during mitosis to form an endocytotic complex during interphase. Interacts with FANCC. Interacts with CEP63; this interaction recruits CDK1 to centrosomes. Interacts with CENPA. Interacts with NR1D1. Interacts with proteasome subunit PSMA8; to participate in meiosis progression during spermatogenesis. Unable to complex with cyclin-B1 and also fails to bind to CDKN1A/p21. As to quaternary structure, (Microbial infection) Interacts with severe fever with thrombocytopenia syndrome virus (SFTSV) NSs; this interaction is inclusion body dependent, it inhibits the formation and nuclear import of the cyclin B1-CDK1 complex and leads to cell cycle arrest. Post-translationally, phosphorylation at Thr-161 by CAK/CDK7 activates kinase activity. Phosphorylation at Thr-14 and Tyr-15 by PKMYT1 prevents nuclear translocation. Phosphorylation at Tyr-15 by WEE1 and WEE2 inhibits the protein kinase activity and acts as a negative regulator of entry into mitosis (G2 to M transition). Phosphorylation by PKMYT1 and WEE1 takes place during mitosis to keep CDK1-cyclin-B complexes inactive until the end of G2. By the end of G2, PKMYT1 and WEE1 are inactivated, but CDC25A and CDC25B are activated. Dephosphorylation by active CDC25A and CDC25B at Thr-14 and Tyr-15, leads to CDK1 activation at the G2-M transition. Phosphorylation at Tyr-15 by WEE2 during oogenesis is required to maintain meiotic arrest in oocytes during the germinal vesicle (GV) stage, a long period of quiescence at dictyate prophase I, leading to prevent meiotic reentry. Phosphorylation by WEE2 is also required for metaphase II exit during egg activation to ensure exit from meiosis in oocytes and promote pronuclear formation. Phosphorylated at Tyr-4 by PKR/EIF2AK2 upon genotoxic stress. This phosphorylation triggers CDK1 polyubiquitination and subsequent proteolysis, thus leading to G2 arrest. In response to UV irradiation, phosphorylation at Tyr-15 by PRKCD activates the G2/M DNA damage checkpoint. In terms of processing, polyubiquitinated upon genotoxic stress. In terms of tissue distribution, found in breast cancer tissues.

The protein resides in the nucleus. Its subcellular location is the cytoplasm. The protein localises to the mitochondrion. It is found in the cytoskeleton. It localises to the microtubule organizing center. The protein resides in the centrosome. Its subcellular location is the spindle. The enzyme catalyses L-seryl-[protein] + ATP = O-phospho-L-seryl-[protein] + ADP + H(+). It catalyses the reaction L-threonyl-[protein] + ATP = O-phospho-L-threonyl-[protein] + ADP + H(+). The catalysed reaction is [DNA-directed RNA polymerase] + ATP = phospho-[DNA-directed RNA polymerase] + ADP + H(+). Its activity is regulated as follows. Phosphorylation at Thr-14 or Tyr-15 inactivates the enzyme, while phosphorylation at Thr-161 activates it. Activated through a multistep process; binding to cyclin-B is required for relocation of cyclin-kinase complexes to the nucleus, activated by CAK/CDK7-mediated phosphorylation on Thr-161, and CDC25-mediated dephosphorylation of inhibitory phosphorylation on Thr-14 and Tyr-15. Activity is restricted during S-phase in an ATR-dependent manner to prevent premature entry into G2. Repressed by the CDK inhibitors CDKN1A/p21 and CDKN1B/p27 during the G1 phase and by CDKN1A/p21 at the G1-S checkpoint upon DNA damage. Transient activation by rapid and transient dephosphorylation at Tyr-15 triggered by TGFB1. Inhibited by flavopiridol and derivatives, pyrimidine derivatives, pyridine derivatives, purine derivatives, staurosporine, paullones, oxoindoles, indazole analogs, indolin-2-ones, pyrazolo[3,4-b]pyridines, imidazo[1,2-a]pyridine (AZ703), thiazolinone analogs(RO-3306), thiazol urea, macrocyclic quinoxalin-2-one, pyrrolo[2,3-a]carbazole, pyrazolo[1,5-a]-1,3,5-triazine, pyrazolo[1,5-a]pyrimidine (Dinaciclib, SCH 727965), 2-(1-ethyl-2-hydroxyethylamino)-6-benzylamino-9-isopropylpurine (roscovitine), olomoucine, AG-024322, AT-7519, P276-00, R547/Ro-4584820 and SNS-032/BMS-387032. In terms of biological role, plays a key role in the control of the eukaryotic cell cycle by modulating the centrosome cycle as well as mitotic onset; promotes G2-M transition via association with multiple interphase cyclins. Phosphorylates PARVA/actopaxin, APC, AMPH, APC, BARD1, Bcl-xL/BCL2L1, BRCA2, CALD1, CASP8, CDC7, CDC20, CDC25A, CDC25C, CC2D1A, CENPA, CSNK2 proteins/CKII, FZR1/CDH1, CDK7, CEBPB, CHAMP1, DMD/dystrophin, EEF1 proteins/EF-1, EZH2, KIF11/EG5, EGFR, FANCG, FOS, GFAP, GOLGA2/GM130, GRASP1, UBE2A/hHR6A, HIST1H1 proteins/histone H1, HMGA1, HIVEP3/KRC, KAT5, LMNA, LMNB, LBR, MKI67, LATS1, MAP1B, MAP4, MARCKS, MCM2, MCM4, MKLP1, MLST8, MYB, NEFH, NFIC, NPC/nuclear pore complex, PITPNM1/NIR2, NPM1, NCL, NUCKS1, NPM1/numatrin, ORC1, PRKAR2A, EEF1E1/p18, EIF3F/p47, p53/TP53, NONO/p54NRB, PAPOLA, PLEC/plectin, RB1, TPPP, UL40/R2, RAB4A, RAP1GAP, RBBP8/CtIP, RCC1, RPS6KB1/S6K1, KHDRBS1/SAM68, ESPL1, SKI, BIRC5/survivin, STIP1, TEX14, beta-tubulins, MAPT/TAU, NEDD1, VIM/vimentin, TK1, FOXO1, RUNX1/AML1, SAMHD1, SIRT2, CGAS and RUNX2. CDK1/CDC2-cyclin-B controls pronuclear union in interphase fertilized eggs. Essential for early stages of embryonic development. During G2 and early mitosis, CDC25A/B/C-mediated dephosphorylation activates CDK1/cyclin complexes which phosphorylate several substrates that trigger at least centrosome separation, Golgi dynamics, nuclear envelope breakdown and chromosome condensation. Once chromosomes are condensed and aligned at the metaphase plate, CDK1 activity is switched off by WEE1- and PKMYT1-mediated phosphorylation to allow sister chromatid separation, chromosome decondensation, reformation of the nuclear envelope and cytokinesis. Phosphorylates KRT5 during prometaphase and metaphase. Inactivated by PKR/EIF2AK2- and WEE1-mediated phosphorylation upon DNA damage to stop cell cycle and genome replication at the G2 checkpoint thus facilitating DNA repair. Reactivated after successful DNA repair through WIP1-dependent signaling leading to CDC25A/B/C-mediated dephosphorylation and restoring cell cycle progression. Catalyzes lamin (LMNA, LMNB1 and LMNB2) phosphorylation at the onset of mitosis, promoting nuclear envelope breakdown. In proliferating cells, CDK1-mediated FOXO1 phosphorylation at the G2-M phase represses FOXO1 interaction with 14-3-3 proteins and thereby promotes FOXO1 nuclear accumulation and transcription factor activity, leading to cell death of postmitotic neurons. The phosphorylation of beta-tubulins regulates microtubule dynamics during mitosis. NEDD1 phosphorylation promotes PLK1-mediated NEDD1 phosphorylation and subsequent targeting of the gamma-tubulin ring complex (gTuRC) to the centrosome, an important step for spindle formation. In addition, CC2D1A phosphorylation regulates CC2D1A spindle pole localization and association with SCC1/RAD21 and centriole cohesion during mitosis. The phosphorylation of Bcl-xL/BCL2L1 after prolongated G2 arrest upon DNA damage triggers apoptosis. In contrast, CASP8 phosphorylation during mitosis prevents its activation by proteolysis and subsequent apoptosis. This phosphorylation occurs in cancer cell lines, as well as in primary breast tissues and lymphocytes. EZH2 phosphorylation promotes H3K27me3 maintenance and epigenetic gene silencing. CALD1 phosphorylation promotes Schwann cell migration during peripheral nerve regeneration. CDK1-cyclin-B complex phosphorylates NCKAP5L and mediates its dissociation from centrosomes during mitosis. Regulates the amplitude of the cyclic expression of the core clock gene BMAL1 by phosphorylating its transcriptional repressor NR1D1, and this phosphorylation is necessary for SCF(FBXW7)-mediated ubiquitination and proteasomal degradation of NR1D1. Phosphorylates EML3 at 'Thr-881' which is essential for its interaction with HAUS augmin-like complex and TUBG1. Phosphorylates CGAS during mitosis, leading to its inhibition, thereby preventing CGAS activation by self DNA during mitosis. Phosphorylates SKA3 on multiple sites during mitosis which promotes SKA3 binding to the NDC80 complex and anchoring of the SKA complex to kinetochores, to enable stable attachment of mitotic spindle microtubules to kinetochores. (Microbial infection) Acts as a receptor for hepatitis C virus (HCV) in hepatocytes and facilitates its cell entry. The polypeptide is Cyclin-dependent kinase 1 (CDK1) (Homo sapiens (Human)).